Here is a 408-residue protein sequence, read N- to C-terminus: MINALKGMKDLQDDQATLYEKVVKTCEEVAKNYGFTFINCPHLELTKLFKRSVGESSDIVGKEMYEFVDKAGNDVCLRPEGTAGVVRSYIEAKMDKNQSVKRWFYHGSMFRYERPQKGRLREFHQFGVESFGVESVYEDASIILMLDEIFKRLKIHTNLKINSLGCKECMGVYKEKLIAFLNSKDGFCEDCLRRKELNPIRVLDCKNDHCQNLIKNAPKLSENLCPCCKKDYEKLQKILSENGIEFECDEKLVRGLDYYSKSAFEFISDEIGAKAAVAGGGRYDRLIEYLDGKSGYGVGFAMGIERIMAILEQKQDIKKRNGIYLCAMDEAYIDTIFKLANTLRKKHKVYLSYEAKKLAKHLNQADNANAKIFLCIGEDEMQKEEIFYKNLDTKENKNIKIANLENEL.

Belongs to the class-II aminoacyl-tRNA synthetase family. In terms of assembly, homodimer.

The protein localises to the cytoplasm. It catalyses the reaction tRNA(His) + L-histidine + ATP = L-histidyl-tRNA(His) + AMP + diphosphate + H(+). The sequence is that of Histidine--tRNA ligase from Campylobacter lari (strain RM2100 / D67 / ATCC BAA-1060).